The following is a 126-amino-acid chain: Large ribosomal subunit protein bL12 (126 aa).

Belongs to the bacterial ribosomal protein bL12 family. In terms of assembly, homodimer. Part of the ribosomal stalk of the 50S ribosomal subunit. Forms a multimeric L10(L12)X complex, where L10 forms an elongated spine to which 2 to 4 L12 dimers bind in a sequential fashion. Binds GTP-bound translation factors.

Forms part of the ribosomal stalk which helps the ribosome interact with GTP-bound translation factors. Is thus essential for accurate translation. The chain is Large ribosomal subunit protein bL12 from Methylobacterium nodulans (strain LMG 21967 / CNCM I-2342 / ORS 2060).